A 209-amino-acid polypeptide reads, in one-letter code: Probable GTP-binding protein EngB (209 aa).

The 177-residue stretch at 22–198 (TPLEIAFVGR…NRTVGSWFDA (177 aa)) folds into the EngB-type G domain. Residues serine 37 and threonine 59 each coordinate Mg(2+).

Belongs to the TRAFAC class TrmE-Era-EngA-EngB-Septin-like GTPase superfamily. EngB GTPase family. The cofactor is Mg(2+).

Functionally, necessary for normal cell division and for the maintenance of normal septation. The polypeptide is Probable GTP-binding protein EngB (Neisseria gonorrhoeae).